We begin with the raw amino-acid sequence, 448 residues long: Multiple inositol polyphosphate phosphatase 1 (448 aa).

Positions 1-19 (MAPRRAACLLPLLVAVASA) are cleaved as a signal peptide. Residue His69 is part of the active site. N-linked (GlcNAc...) asparagine glycans are attached at residues Asn203, Asn257, Asn409, and Asn441. The Prevents secretion from ER signature appears at 445–448 (ADEL).

It belongs to the histidine acid phosphatase family. MINPP1 subfamily. In terms of processing, N-glycosylated. Present in growth plate chondrocytes but not detectable in articular chondrocytes (at protein level). Spatially restricted to chondrocytes in the lower portion of the proliferative zone and the upper portion of the hypertrophic zone in the growth plate of long bones (at protein level). Weakly expressed in kidney, liver, lung, skin and spleen, and not detected in brain, heart and muscle.

It localises to the endoplasmic reticulum lumen. The protein localises to the secreted. Its subcellular location is the cell membrane. It catalyses the reaction 1D-myo-inositol hexakisphosphate + H2O = 1D-myo-inositol 1,2,4,5,6-pentakisphosphate + phosphate. The catalysed reaction is 1D-myo-inositol 1,2,4,5,6-pentakisphosphate + H2O = 1D-myo-inositol 1,2,5,6-tetrakisphosphate + phosphate. The enzyme catalyses 1D-myo-inositol 1,2,5,6-tetrakisphosphate + H2O = 1D-myo-inositol 1,2,6-trisphosphate + phosphate. It carries out the reaction 1D-myo-inositol 1,2,6-trisphosphate + H2O = 1D-myo-inositol 1,2-bisphosphate + phosphate. It catalyses the reaction 1D-myo-inositol 1,2-bisphosphate + H2O = 1D-myo-inositol 2-phosphate + phosphate. The catalysed reaction is 1D-myo-inositol hexakisphosphate + H2O = 1D-myo-inositol 1,2,3,5,6-pentakisphosphate + phosphate. The enzyme catalyses 1D-myo-inositol 1,2,3,5,6-pentakisphosphate + H2O = 1D-myo-inositol 1,2,3,6-tetrakisphosphate + phosphate. It carries out the reaction 1D-myo-inositol 1,2,3,6-tetrakisphosphate + H2O = 1D-myo-inositol 1,2,3-trisphosphate + phosphate. It catalyses the reaction 1D-myo-inositol 1,2,3-trisphosphate + H2O = 1D-myo-inositol 2,3-bisphosphate + phosphate. The catalysed reaction is 1D-myo-inositol 2,3-bisphosphate + H2O = 1D-myo-inositol 2-phosphate + phosphate. The enzyme catalyses 1D-myo-inositol 1,3,4,5,6-pentakisphosphate + H2O = 1D-myo-inositol 1,4,5,6-tetrakisphosphate + phosphate. It carries out the reaction 1D-myo-inositol 1,4,5,6-tetrakisphosphate + H2O = 1D-myo-inositol 1,4,5-trisphosphate + phosphate. It catalyses the reaction (2R)-2,3-bisphosphoglycerate + H2O = (2R)-2-phosphoglycerate + phosphate. Multiple inositol polyphosphate phosphatase that hydrolyzes 1D-myo-inositol 1,3,4,5,6-pentakisphosphate (InsP5[2OH]) and 1D-myo-inositol hexakisphosphate (InsP6) to a range of less phosphorylated inositol phosphates. This regulates the availability of these various small molecule second messengers and metal chelators which control many aspects of cell physiology. Has a weak in vitro activity towards 1D-myo-inositol 1,4,5-trisphosphate which is unlikely to be physiologically relevant. By regulating intracellular inositol polyphosphates pools, which act as metal chelators, it may control the availability of intracellular calcium and iron, which are important for proper neuronal development and homeostasis. May have a dual substrate specificity, and function as a 2,3-bisphosphoglycerate 3-phosphatase hydrolyzing 2,3-bisphosphoglycerate to 2-phosphoglycerate. 2,3-bisphosphoglycerate (BPG) is formed as part of the Rapoport-Luebering glycolytic bypass and is a regulator of systemic oxygen homeostasis as the major allosteric effector of hemoglobin. The protein is Multiple inositol polyphosphate phosphatase 1 (MINPP1) of Gallus gallus (Chicken).